Reading from the N-terminus, the 165-residue chain is Histone H1 (165 aa).

The tract at residues 1–165 is disordered; that stretch reads GKQSTSKSVT…KKATKGSKKN (165 aa). Over residues 9–18 the composition is skewed to basic and acidic residues; the sequence is VTREKKDVKK. The span at 20–31 shows a compositional bias: basic residues; sequence VAPKKAIKKVTK. A compositionally biased stretch (low complexity) spans 32–41; it reads KSTTPVKTSK. Phosphothreonine occurs at positions 48 and 54. The segment covering 68–89 has biased composition (basic and acidic residues); sequence TMKESVSDAKKTVHKSAGDKKL. A Phosphoserine modification is found at S83. Positions 103–117 are enriched in basic residues; that stretch reads KIVHPAKKAAAKPKT. Residue T117 is modified to Phosphothreonine. Residues 118 to 157 are compositionally biased toward basic and acidic residues; that stretch reads AKKEVKKDTKPVKKDAKKDTKPVKKDAKKDTKPAKKDTKK.

Post-translationally, cell-growth/division-associated phosphorylation by a CDC2-like kinase. Is additionally phosphorylated on either Ser-33, Thr-34 or Thr-35, and on either Thr-39 or Ser-40.

Its subcellular location is the nucleus. It is found in the chromosome. Functionally, histones H1 are necessary for the condensation of nucleosome chains into higher-order structures. This is Histone H1 (HHO) from Tetrahymena pyriformis.